We begin with the raw amino-acid sequence, 503 residues long: Hexose transporter 1 (503 aa).

Residues 1 to 26 (MKKSSKEISPSQSLKNGGSDHFFNTS) are Cytoplasmic-facing. Residues 27–47 (LMYVLAACLASFIFGYQVSVL) form a helical membrane-spanning segment. At 48-76 (NTIKNFIVIEFGWCTGNKVECDDSTLKSS) the chain is on the extracellular side. C61 and C68 are disulfide-bonded. A helical transmembrane segment spans residues 77 to 97 (FLLASVFIGAVVGSGFSDYLV). The Cytoplasmic segment spans residues 98–102 (QHGRR). Residues 103–123 (FSLLVIYNFFILVSILTSITH) traverse the membrane as a helical segment. Residues 124–132 (HFHTILFSR) lie on the Extracellular side of the membrane. A helical transmembrane segment spans residues 133-153 (LLSGFGVGLITVSVPMYISEM). At 154 to 163 (THKDKKGAYG) the chain is on the cytoplasmic side. The chain crosses the membrane as a helical span at residues 164–184 (VLHQLFITFGILVAVLLGMAM). Residue Q167 coordinates alpha-D-glucose. Residue Q167 participates in beta-D-glucose binding. The Extracellular portion of the chain corresponds to 185-205 (GEAPDAKSVDALGEFQKIWWR). A helical membrane pass occupies residues 206–226 (LMFFFPCLISILGIVLLTFFY). Residues 227 to 291 (KEETPYYLFE…RAMQIPSYRN (65 aa)) are Cytoplasmic-facing. The chain crosses the membrane as a helical span at residues 292 to 312 (VILLGCILSGLQQFTGINVLV). Residues Q303, Q304, and N309 each coordinate alpha-D-glucose. Q303 provides a ligand contact to beta-D-glucose. Residue N309 participates in beta-D-glucose binding. Over 313–329 (SNSNELYKEFLSNKLIT) the chain is Extracellular. Residues 330 to 350 (TLSVIMTVVNFLMTFPAIYIV) traverse the membrane as a helical segment. N339 is a beta-D-glucose binding site. At 351 to 356 (EKLGRK) the chain is on the cytoplasmic side. The chain crosses the membrane as a helical span at residues 357–377 (TLLLCGCAGVTLAAFLPTAIA). Over 378–391 (NQIDRSSDLVRNLS) the chain is Extracellular. A helical transmembrane segment spans residues 392–412 (IAATFVMIISFAVSYGPVLWI). W411 lines the alpha-D-glucose pocket. Residues 413 to 428 (YLHEMFPSEIKDSAAS) lie on the Cytoplasmic side of the membrane. A helical membrane pass occupies residues 429–449 (LASLVNWVCAIIVVFPSDIII). At 450–454 (KKSPT) the chain is on the extracellular side. Residues 455-475 (ILFFIFSGMSILSFLFIFFFI) form a helical membrane-spanning segment. The Cytoplasmic portion of the chain corresponds to 476-503 (KETKGGEIGTSPYITMEERQKHMGKSAV).

Belongs to the major facilitator superfamily. Sugar transporter (TC 2.A.1.1) family. In terms of assembly, homodimer.

Its subcellular location is the cell membrane. The catalysed reaction is D-glucose(out) = D-glucose(in). It catalyses the reaction D-fructose(out) = D-fructose(in). It carries out the reaction D-galactose(in) = D-galactose(out). The enzyme catalyses D-mannose(out) = D-mannose(in). The catalysed reaction is D-glucosamine(out) = D-glucosamine(in). It catalyses the reaction D-xylose(out) = D-xylose(in). Its activity is regulated as follows. Inhibited by compound 3361 (3-O-((undec-10-en)-1-yl)-D-glucose). Sodium-independent facilitative hexose transporter. Can transport D-glucose and D-fructose. Can transport D-mannose, D-galactose, D-xylose and D-glucosamine. This chain is Hexose transporter 1, found in Plasmodium vivax.